A 223-amino-acid polypeptide reads, in one-letter code: Cytidylate kinase (223 aa).

12–20 (GPAGSGKST) is a binding site for ATP.

The protein belongs to the cytidylate kinase family. Type 1 subfamily.

Its subcellular location is the cytoplasm. The enzyme catalyses CMP + ATP = CDP + ADP. It carries out the reaction dCMP + ATP = dCDP + ADP. This chain is Cytidylate kinase, found in Onion yellows phytoplasma (strain OY-M).